We begin with the raw amino-acid sequence, 149 residues long: MKVIFLKDVKGKGKKGEVKNVADGYAHNFLIKQGLAVEANPTNLSALEGQKNKEKKNAVQELEQAKQLKETLEALTVELTAKSGEGGRLFGSITSKQIADKLQKDHQIKVDKRKIELNDAIRALGYTNVPVKLHPEVQATLKVHVTEQA.

This sequence belongs to the bacterial ribosomal protein bL9 family.

Functionally, binds to the 23S rRNA. This Bacillus pumilus (strain SAFR-032) protein is Large ribosomal subunit protein bL9.